The following is a 159-amino-acid chain: Small ribosomal subunit protein uS7 (159 aa).

Belongs to the universal ribosomal protein uS7 family. As to quaternary structure, part of the 30S ribosomal subunit. Contacts proteins S9 and S11.

One of the primary rRNA binding proteins, it binds directly to 16S rRNA where it nucleates assembly of the head domain of the 30S subunit. Is located at the subunit interface close to the decoding center, probably blocks exit of the E-site tRNA. This chain is Small ribosomal subunit protein uS7, found in Elusimicrobium minutum (strain Pei191).